Reading from the N-terminus, the 409-residue chain is Lissencephaly-1 homolog (409 aa).

A LisH domain is found at 7–39; it reads QEEELRFAVADYLQSCGYTNALEAFKKDASIPK. The stretch at 56 to 81 forms a coiled coil; it reads SVVRLQKKVMDLELRLNNTTREMNSG. Residues 75-92 are compositionally biased toward polar residues; the sequence is TREMNSGVPTRNSRSSND. Positions 75–105 are disordered; that stretch reads TREMNSGVPTRNSRSSNDWIPRPPEKHSLSG. 7 WD repeats span residues 105–146, 147–186, 189–228, 231–270, 273–332, 335–374, and 377–409; these read GHRS…RTLR, GHTDSVQDLAFDSSGKLLASSSADMTVKIWDFQTFECRMT, GHDHNVSSVCFLPSGDFLLSSSRDKTIKMWEVATGYCVYN, GHREWVRRVAVASDGSLMASCSNDQTVRIWSLSSKECKEE, GHEH…CLFS, GHDNWVRGLAFHAGGKYLTSASDDKTIKIWELRHKRCSKS, and AHNHFVTTIDFHRSSPFVITGSVDLTIKVWECR.

This sequence belongs to the WD repeat LIS1/nudF family.

It is found in the cytoplasm. Its subcellular location is the cytoskeleton. The protein resides in the microtubule organizing center. It localises to the centrosome. Its function is as follows. Positively regulates the activity of the minus-end directed microtubule motor protein dynein. May enhance dynein-mediated microtubule sliding by targeting dynein to the microtubule plus end. Required for several dynein- and microtubule-dependent processes. The protein is Lissencephaly-1 homolog of Trichoplax adhaerens (Trichoplax reptans).